A 217-amino-acid chain; its full sequence is D-methionine transport system permease protein MetI (217 aa).

The Periplasmic segment spans residues 1-19 (MSEAMMWLLVRGVWETLAM). The ABC transmembrane type-1 domain occupies 13–204 (VWETLAMTFV…LLVVLVYLIQ (192 aa)). A helical membrane pass occupies residues 20-40 (TFVSGFFGFVIGLPVGVLLYV). The Cytoplasmic portion of the chain corresponds to 41–67 (TRPGQIMENARLYRSLSAVVNIFRSIP). The chain crosses the membrane as a helical span at residues 68–88 (FIILLVWMIPFTRIIVGTSIG). Residues 89-92 (LQAA) lie on the Periplasmic side of the membrane. Residues 93-113 (IVPLTVGAAPFIARIVENALL) form a helical membrane-spanning segment. Over 114-151 (EIPAGLIEASRAMGATPLQIVRKILLPEALPGLVNAAT) the chain is Cytoplasmic. Residues 152–172 (ITLITLVGYSAMGGAVGAGGL) traverse the membrane as a helical segment. Topologically, residues 173–185 (GQIGYQYGYIGYN) are periplasmic. The chain crosses the membrane as a helical span at residues 186 to 206 (ATVMNTVLVLLVVLVYLIQLS). The Cytoplasmic portion of the chain corresponds to 207–217 (GDRIVRAVTHK).

This sequence belongs to the binding-protein-dependent transport system permease family. CysTW subfamily.

Its subcellular location is the cell inner membrane. Functionally, part of the binding-protein-dependent transport system for D-methionine and the toxic methionine analog alpha-methyl-methionine. Probably responsible for the translocation of the substrate across the membrane. The chain is D-methionine transport system permease protein MetI (metI) from Salmonella typhi.